The chain runs to 640 residues: Threonine--tRNA ligase (640 aa).

In terms of domain architecture, TGS spans 1–60 (MKITFPDGAVKEFEPGVSTADIAASISPGLKKKALAGKLNGELLDLVTPIHEDGAIEIVT). Residues 241-538 (DHRKLGKELE…LIEEYKGAFP (298 aa)) form a catalytic region. Residues Cys334, His385, and His515 each contribute to the Zn(2+) site.

This sequence belongs to the class-II aminoacyl-tRNA synthetase family. Homodimer. Zn(2+) is required as a cofactor.

It is found in the cytoplasm. The catalysed reaction is tRNA(Thr) + L-threonine + ATP = L-threonyl-tRNA(Thr) + AMP + diphosphate + H(+). Catalyzes the attachment of threonine to tRNA(Thr) in a two-step reaction: L-threonine is first activated by ATP to form Thr-AMP and then transferred to the acceptor end of tRNA(Thr). Also edits incorrectly charged L-seryl-tRNA(Thr). This chain is Threonine--tRNA ligase, found in Listeria welshimeri serovar 6b (strain ATCC 35897 / DSM 20650 / CCUG 15529 / CIP 8149 / NCTC 11857 / SLCC 5334 / V8).